The primary structure comprises 125 residues: Small ribosomal subunit protein uS13 (125 aa).

The interval 92 to 125 (RRSLPVRGQRTRTNARTRKGKRKTVAGKKKAVKK) is disordered.

It belongs to the universal ribosomal protein uS13 family. As to quaternary structure, part of the 30S ribosomal subunit. Forms a loose heterodimer with protein S19. Forms two bridges to the 50S subunit in the 70S ribosome.

Its function is as follows. Located at the top of the head of the 30S subunit, it contacts several helices of the 16S rRNA. In the 70S ribosome it contacts the 23S rRNA (bridge B1a) and protein L5 of the 50S subunit (bridge B1b), connecting the 2 subunits; these bridges are implicated in subunit movement. Contacts the tRNAs in the A and P-sites. This chain is Small ribosomal subunit protein uS13, found in Pelodictyon phaeoclathratiforme (strain DSM 5477 / BU-1).